The following is a 452-amino-acid chain: Adenylosuccinate synthetase (452 aa).

GTP-binding positions include 40–46 (GDEGKGK) and 68–70 (GHT). The active-site Proton acceptor is the Asp41. Residues Asp41 and Gly68 each coordinate Mg(2+). Residues 41–44 (DEGK), 66–69 (NAGH), Thr158, Arg172, Asn250, Thr265, and Arg329 contribute to the IMP site. The Proton donor role is filled by His69. 325-331 (VTTKRKR) contacts substrate. GTP contacts are provided by residues Arg331, 357-359 (KLD), and 440-442 (GVG).

The protein belongs to the adenylosuccinate synthetase family. In terms of assembly, homodimer. Requires Mg(2+) as cofactor.

The protein localises to the cytoplasm. It catalyses the reaction IMP + L-aspartate + GTP = N(6)-(1,2-dicarboxyethyl)-AMP + GDP + phosphate + 2 H(+). The protein operates within purine metabolism; AMP biosynthesis via de novo pathway; AMP from IMP: step 1/2. Functionally, plays an important role in the de novo pathway and in the salvage pathway of purine nucleotide biosynthesis. Catalyzes the first committed step in the biosynthesis of AMP from IMP. This is Adenylosuccinate synthetase from Drosophila grimshawi (Hawaiian fruit fly).